Reading from the N-terminus, the 668-residue chain is Eukaryotic translation initiation factor 3 subunit L (668 aa).

Residues 1–17 (MVADASQQGQSNGAAFN) are compositionally biased toward polar residues. Residues 1–42 (MVADASQQGQSNGAAFNQQQQYQQQQQRQLFGGEEEFGDEEE) form a disordered region. Residues 18–32 (QQQQYQQQQQRQLFG) are compositionally biased toward low complexity. A compositionally biased stretch (acidic residues) spans 33-42 (GEEEFGDEEE). The region spanning 358–552 (SFTHILVFIM…QVVNTSDLDF (195 aa)) is the PCI domain. Positions 625-668 (AGVKAGPPAFSQRSGGAGRSSVNKSAPAPAGAWGSSKPQPSVTA) are disordered. A compositionally biased stretch (low complexity) spans 648 to 662 (KSAPAPAGAWGSSKP).

This sequence belongs to the eIF-3 subunit L family. As to quaternary structure, component of the eukaryotic translation initiation factor 3 (eIF-3) complex.

The protein localises to the cytoplasm. Functionally, component of the eukaryotic translation initiation factor 3 (eIF-3) complex, which is involved in protein synthesis of a specialized repertoire of mRNAs and, together with other initiation factors, stimulates binding of mRNA and methionyl-tRNAi to the 40S ribosome. The eIF-3 complex specifically targets and initiates translation of a subset of mRNAs involved in cell proliferation. The chain is Eukaryotic translation initiation factor 3 subunit L from Mycosarcoma maydis (Corn smut fungus).